A 209-amino-acid chain; its full sequence is Uracil phosphoribosyltransferase (209 aa).

Residues arginine 79, arginine 104, and 131 to 139 (DPMLATGGS) each bind 5-phospho-alpha-D-ribose 1-diphosphate. Uracil is bound by residues isoleucine 194 and 199–201 (GDA). Residue aspartate 200 coordinates 5-phospho-alpha-D-ribose 1-diphosphate.

It belongs to the UPRTase family. The cofactor is Mg(2+).

The enzyme catalyses UMP + diphosphate = 5-phospho-alpha-D-ribose 1-diphosphate + uracil. The protein operates within pyrimidine metabolism; UMP biosynthesis via salvage pathway; UMP from uracil: step 1/1. Allosterically activated by GTP. Functionally, catalyzes the conversion of uracil and 5-phospho-alpha-D-ribose 1-diphosphate (PRPP) to UMP and diphosphate. This chain is Uracil phosphoribosyltransferase, found in Oceanobacillus iheyensis (strain DSM 14371 / CIP 107618 / JCM 11309 / KCTC 3954 / HTE831).